A 364-amino-acid chain; its full sequence is MMHVILPWELVEEILYRVPPLSLTRFKIVCKQWNTLFKSKSFVNNHLVRVRPQFLLWTDSKMYSVSVNLNDDQKIDMRELPLDIPYLNNFMRTYFTPCDGLLFCDSWSWRKKAAIWNPWLRQTKWIEYSKEKTFTFRGIGYDSGRPDKGHKIIGSSIYNKRKLIEDPLYRSVEIYTFETNGWKSMNTFSEEGEIRPLSDVSLNGNLYWVVSNGETHECFIESFDFSKEIYKCFCTLPWNYNSFHVPVLSTFRKDRLSVLKRKRMAETNNIEIWVTKNKINDDGEPVAWIKFMTVSIAISSNSSPSFFIDNVYQKSFIMCCEDENNKLCVYIVRGNALTKIQIVGVDAKNYINHCSYVPSLIPVP.

The F-box domain maps to 1-50; that stretch reads MMHVILPWELVEEILYRVPPLSLTRFKIVCKQWNTLFKSKSFVNNHLVRV. Kelch repeat units follow at residues 156–205 and 328–364; these read SIYN…LNGN and CVYI…IPVP.

This Arabidopsis thaliana (Mouse-ear cress) protein is Putative F-box/kelch-repeat protein At1g12170.